A 343-amino-acid chain; its full sequence is Ferrochelatase (343 aa).

His191 and Glu270 together coordinate Fe cation.

This sequence belongs to the ferrochelatase family.

Its subcellular location is the cytoplasm. It carries out the reaction heme b + 2 H(+) = protoporphyrin IX + Fe(2+). The protein operates within porphyrin-containing compound metabolism; protoheme biosynthesis; protoheme from protoporphyrin-IX: step 1/1. In terms of biological role, catalyzes the ferrous insertion into protoporphyrin IX. The chain is Ferrochelatase from Phenylobacterium zucineum (strain HLK1).